Reading from the N-terminus, the 114-residue chain is C-X-C motif chemokine 6 (114 aa).

The signal sequence occupies residues 1-37 (MSLPSSRAARVPGPSGSLCALLALLLLLTPPGPLASA). Intrachain disulfides connect cysteine 49-cysteine 75 and cysteine 51-cysteine 91.

It belongs to the intercrine alpha (chemokine CxC) family.

It is found in the secreted. In terms of biological role, chemotactic for neutrophil granulocytes. Signals through binding and activation of its receptors (CXCR1 and CXCR2). In addition to its chemotactic and angiogenic properties, it has strong antibacterial activity against Gram-positive and Gram-negative bacteria (90-fold-higher when compared to CXCL5 and CXCL7). The protein is C-X-C motif chemokine 6 (CXCL6) of Homo sapiens (Human).